Consider the following 419-residue polypeptide: F-box/FBD/LRR-repeat protein At4g26340 (419 aa).

Residues 1–53 (MDRISQLSDDLLLQILSFIPGKDVVATSLLSKRWQSLWMLVSELEYDDSYHTG) form the F-box domain. 7 LRR repeats span residues 55 to 81 (YKSF…HLNL), 132 to 159 (TLRL…HLKT), 160 to 185 (VDYE…FVER), 187 to 208 (DQDL…SMID), 226 to 253 (YLNI…HVDI), 254 to 284 (TQGV…MCPS), and 299 to 324 (VVKG…KLID). Residues 339–389 (GWKLPSSVPECLLFSLEAFEWIGYKGRRGDREVATYVLKNAACLRTAKFSP) form the FBD domain.

The polypeptide is F-box/FBD/LRR-repeat protein At4g26340 (Arabidopsis thaliana (Mouse-ear cress)).